A 677-amino-acid chain; its full sequence is Methionine--tRNA ligase (677 aa).

A 'HIGH' region motif is present at residues proline 15–histidine 25. Residues cysteine 146, cysteine 149, cysteine 159, and cysteine 162 each coordinate Zn(2+). The short motif at lysine 333–serine 337 is the 'KMSKS' region element. An ATP-binding site is contributed by lysine 336. A tRNA-binding domain is found at aspartate 575 to lysine 677.

Belongs to the class-I aminoacyl-tRNA synthetase family. MetG type 1 subfamily. As to quaternary structure, homodimer. Requires Zn(2+) as cofactor.

Its subcellular location is the cytoplasm. It catalyses the reaction tRNA(Met) + L-methionine + ATP = L-methionyl-tRNA(Met) + AMP + diphosphate. Functionally, is required not only for elongation of protein synthesis but also for the initiation of all mRNA translation through initiator tRNA(fMet) aminoacylation. The chain is Methionine--tRNA ligase from Shigella boydii serotype 18 (strain CDC 3083-94 / BS512).